A 204-amino-acid polypeptide reads, in one-letter code: Imidazoleglycerol-phosphate dehydratase (204 aa).

Belongs to the imidazoleglycerol-phosphate dehydratase family.

It localises to the cytoplasm. It catalyses the reaction D-erythro-1-(imidazol-4-yl)glycerol 3-phosphate = 3-(imidazol-4-yl)-2-oxopropyl phosphate + H2O. The protein operates within amino-acid biosynthesis; L-histidine biosynthesis; L-histidine from 5-phospho-alpha-D-ribose 1-diphosphate: step 6/9. This Albidiferax ferrireducens (strain ATCC BAA-621 / DSM 15236 / T118) (Rhodoferax ferrireducens) protein is Imidazoleglycerol-phosphate dehydratase.